The chain runs to 458 residues: MLGAVKMEGHEPSDWSSYYAEPEGYSSVSNMNASLGMNGMNTYMSMSAAAMGSGSGNMSAGSMNMSSYVGAGMSPSLAGMSPGAGAMAGMSGSAGAAGVAGMGPHLSPSLSPLGGQAAGAMGGLAPYANMNSMSPMYGQAGLSRARDPKTYRRSYTHAKPPYSYISLITMAIQQSPNKMLTLSEIYQWIMDLFPFYRQNQQRWQNSIRHSLSFNDFLKVPRAPDKPGKGSFWTLHPDSGNMFENGCYLRRQKRFKCENELALKEAAGAGSGGGKKTAPGTQASQVQLGEAAGSASETPAGTESPHSSASPCQEHKRGGLSELKGTPASALSPPEPAPSPGQQQQAAAHLLGPPHHPGLPPEAHLKPEHHYAFNHPFSINNLMSSEQQHHHSHHHHQPHKMDLKTYEQVMHYPGGYGSPMPGSLAMGPVTNKAGLDASPLAADTSYYQGVYSRPIMNSS.

A transactivation domain 1 region spans residues 14 to 93 (DWSSYYAEPE…AGAMAGMSGS (80 aa)). Positions 106–113 (LSPSLSPL) match the Nuclear localization signal motif. T156 carries the phosphothreonine; by PKB/AKT1 modification. The segment at residues 159–252 (KPPYSYISLI…ENGCYLRRQK (94 aa)) is a DNA-binding region (fork-head). S212 and S283 each carry phosphoserine. Residues 286–365 (QLGEAAGSAS…PGLPPEAHLK (80 aa)) form a disordered region. Residues 294 to 310 (ASETPAGTESPHSSASP) are compositionally biased toward polar residues. T301 bears the Phosphothreonine mark. 4 positions are modified to phosphoserine: S303, S306, S307, and S309. Residues 339-352 (PGQQQQAAAHLLGP) show a composition bias toward low complexity. Residues 361 to 458 (EAHLKPEHHY…VYSRPIMNSS (98 aa)) form a transactivation domain 2 region. Phosphoserine is present on residues S437 and S458.

In terms of assembly, binds DNA as a monomer. Binds TLE1. Interacts with FOXA1 and FOXA3. Interacts with PRKDC. Interacts with AKT1. Interacts with TET1; this interaction may recruit TET1 to specific genomic loci to mediate their demethylation. Post-translationally, phosphorylation on Thr-156 abolishes binding to target promoters and subsequent transcription activation upon insulin stimulation. Liver.

The protein localises to the nucleus. It localises to the cytoplasm. In terms of biological role, transcription factor that is involved in embryonic development, establishment of tissue-specific gene expression and regulation of gene expression in differentiated tissues. Is thought to act as a 'pioneer' factor opening the compacted chromatin for other proteins through interactions with nucleosomal core histones and thereby replacing linker histones at target enhancer and/or promoter sites. Binds DNA with the consensus sequence 5'-[AC]A[AT]T[AG]TT[GT][AG][CT]T[CT]-3'. In embryonic development is required for notochord formation. Involved in the development of multiple endoderm-derived organ systems such as the liver, pancreas and lungs; FOXA1 and FOXA2 seem to have at least in part redundant roles. Originally described as a transcription activator for a number of liver genes such as AFP, albumin, tyrosine aminotransferase, PEPCK, etc. Interacts with the cis-acting regulatory regions of these genes. Involved in glucose homeostasis; regulates the expression of genes important for glucose sensing in pancreatic beta-cells and glucose homeostasis. Involved in regulation of fat metabolism. Acts synergistically with ONECUT1 to activate transcription of female-specific CYP2C12; the function is inhibited by growth hormone-activated STAT5B. Acts synergistically with HNF4A to activate transcription of APOA1. The chain is Hepatocyte nuclear factor 3-beta (Foxa2) from Rattus norvegicus (Rat).